A 1199-amino-acid chain; its full sequence is Pyruvate-flavodoxin oxidoreductase (1199 aa).

4Fe-4S ferredoxin-type domains follow at residues 699 to 728 and 755 to 784; these read EIPV…AKVY and FTIQ…EPSL. Positions 708, 711, 714, 718, 764, 767, 770, 774, 838, 841, 866, and 1103 each coordinate [4Fe-4S] cluster.

It belongs to the pyruvate:ferredoxin/flavodoxin oxidoreductase family. The cofactor is [4Fe-4S] cluster.

The enzyme catalyses oxidized [flavodoxin] + pyruvate + CoA + 2 H(+) = reduced [flavodoxin] + acetyl-CoA + CO2. Functionally, oxidoreductase required for the transfer of electrons from pyruvate to flavodoxin, which reduces nitrogenase. This chain is Pyruvate-flavodoxin oxidoreductase (nifJ), found in Nostoc sp. (strain PCC 7120 / SAG 25.82 / UTEX 2576).